The sequence spans 961 residues: Ras-interacting protein 1 (961 aa).

Over residues 1–10 the composition is skewed to basic and acidic residues; sequence MLSGERKEGG. Disordered regions lie at residues 1 to 21, 35 to 70, and 96 to 116; these read MLSG…HLPV, LGRR…PHVE, and RGSG…QRWA. A compositionally biased stretch (low complexity) spans 41–57; sequence SAASVKSSSSDTGSRSS. Over residues 59-68 the composition is skewed to pro residues; it reads PLPPPPPPPH. Position 96 is an omega-N-methylarginine (arginine 96). Over residues 98–110 the composition is skewed to gly residues; it reads SGAGGAGGPGTPG. The region spanning 141–253 is the Ras-associating domain; the sequence is PPGVLKIFAS…RRFELRGREE (113 aa). The interval 261-352 is disordered; that stretch reads AFGAADADGT…MAPGAADAQM (92 aa). Residues serine 274 and serine 286 each carry the phosphoserine modification. Residues 284–295 show a composition bias toward low complexity; that stretch reads AASGGAALASPG. Positions 296–307 are enriched in gly residues; it reads PGSGSGTPTGSG. Positions 314–327 are enriched in low complexity; the sequence is NLSLRRSVSELSLQ. Residues serine 320, serine 322, serine 325, and serine 413 each carry the phosphoserine modification. Residues 594–895 enclose the Dilute domain; it reads GRLARLIKEA…PPAERDAVDT (302 aa).

Interacts with Ras family members that have been activated by GTP binding. Interacts with HRAS, RAP1A, RAP2, RRAS, RAF1 and RRAS2. Interacts with MYH9 and ARHGAP29. In terms of tissue distribution, detected in kidney, heart, skeletal muscle, small intestine and lung.

Its subcellular location is the cytoplasm. The protein localises to the perinuclear region. The protein resides in the golgi apparatus. It localises to the golgi stack. Its function is as follows. Required for the proper formation of vascular structures that develop via both vasculogenesis and angiogenesis. Acts as a critical and vascular-specific regulator of GTPase signaling, cell architecture, and adhesion, which is essential for endothelial cell morphogenesis and blood vessel tubulogenesis. Regulates the activity of Rho GTPases in part by recruiting ARHGAP29 and suppressing RhoA signaling and dampening ROCK and MYH9 activities in endothelial cells. May act as effector for Golgi-bound HRAS and other Ras-like proteins. May promote HRAS-mediated transformation. Negative regulator of amino acid starvation-induced autophagy. In Mus musculus (Mouse), this protein is Ras-interacting protein 1 (Rasip1).